A 498-amino-acid polypeptide reads, in one-letter code: Glycerol kinase (498 aa).

Residue Thr12 participates in ADP binding. The ATP site is built by Thr12, Thr13, and Ser14. Sn-glycerol 3-phosphate is bound at residue Thr12. Position 16 (Arg16) interacts with ADP. Arg82, Glu83, and Tyr134 together coordinate sn-glycerol 3-phosphate. Arg82, Glu83, and Tyr134 together coordinate glycerol. His230 carries the phosphohistidine; by HPr modification. Residue Asp244 participates in sn-glycerol 3-phosphate binding. Positions 244 and 245 each coordinate glycerol. ADP contacts are provided by Thr266 and Gly309. Residues Thr266, Gly309, Gln313, and Gly410 each contribute to the ATP site. The ADP site is built by Gly410 and Asn414.

Belongs to the FGGY kinase family. In terms of assembly, homotetramer and homodimer (in equilibrium). In terms of processing, the phosphoenolpyruvate-dependent sugar phosphotransferase system (PTS), including enzyme I, and histidine-containing protein (HPr) are required for the phosphorylation, which leads to the activation of the enzyme.

It catalyses the reaction glycerol + ATP = sn-glycerol 3-phosphate + ADP + H(+). It participates in polyol metabolism; glycerol degradation via glycerol kinase pathway; sn-glycerol 3-phosphate from glycerol: step 1/1. Activated by phosphorylation and inhibited by fructose 1,6-bisphosphate (FBP). Functionally, key enzyme in the regulation of glycerol uptake and metabolism. Catalyzes the phosphorylation of glycerol to yield sn-glycerol 3-phosphate. This is Glycerol kinase from Staphylococcus aureus (strain Mu50 / ATCC 700699).